A 207-amino-acid chain; its full sequence is Calcipressin-like protein (207 aa).

The required for tax-6 interaction stretch occupies residues P176–H181.

It belongs to the RCAN family. Interacts with tax-6 (via catalytic domain); the interaction is calcium-dependent. As to expression, expressed in lateral hypodermal cells, marginal cells of the pharynx, vulva epithelial cells, ventral and dorsal nerve cords and commissures and various neurons in the anterior and posterior regions. Expressed in male tail structures including the diagonal muscles, sensory rays and spicules. Expressed in PHC neurons and most tail neurons and support cells of the phasmid neurons. Also expressed in pharyngeal muscle, head neurons, excretory canal cells and hypodermal seam cells.

In terms of biological role, inhibits tax-6/calcineurin A phosphatase activity and thereby negatively regulates calcineurin-mediated functions. Plays a role in modulating temperature-dependent calcium responses in AFD neurons and in addition, also negatively regulates thermotaxis in a tax-6-dependent manner in AFD neurons. In response to changes in intracellular calcium levels may also regulate nuclear translocation of transcriptional regulators such as crtc-1. May play a role in regulating body size. Plays a role in male tail tip morphogenesis. The sequence is that of Calcipressin-like protein from Caenorhabditis elegans.